Reading from the N-terminus, the 413-residue chain is Peptidase T (413 aa).

Position 81 (His81) interacts with Zn(2+). Asp83 is a catalytic residue. Residue Asp143 coordinates Zn(2+). Glu178 acts as the Proton acceptor in catalysis. Glu179, Asp201, and His383 together coordinate Zn(2+).

The protein belongs to the peptidase M20B family. It depends on Zn(2+) as a cofactor.

Its subcellular location is the cytoplasm. The catalysed reaction is Release of the N-terminal residue from a tripeptide.. Functionally, cleaves the N-terminal amino acid of tripeptides. The polypeptide is Peptidase T (Lactococcus lactis subsp. hordniae).